Consider the following 269-residue polypeptide: Bifunctional protein FolD (269 aa).

Residues 149-151 (GLG) and V215 each bind NADP(+).

Belongs to the tetrahydrofolate dehydrogenase/cyclohydrolase family. Homodimer.

It catalyses the reaction (6R)-5,10-methylene-5,6,7,8-tetrahydrofolate + NADP(+) = (6R)-5,10-methenyltetrahydrofolate + NADPH. The catalysed reaction is (6R)-5,10-methenyltetrahydrofolate + H2O = (6R)-10-formyltetrahydrofolate + H(+). It functions in the pathway one-carbon metabolism; tetrahydrofolate interconversion. In terms of biological role, catalyzes the oxidation of 5,10-methylenetetrahydrofolate to 5,10-methenyltetrahydrofolate and then the hydrolysis of 5,10-methenyltetrahydrofolate to 10-formyltetrahydrofolate. The sequence is that of Bifunctional protein FolD from Mycoplasma pneumoniae (strain ATCC 29342 / M129 / Subtype 1) (Mycoplasmoides pneumoniae).